The following is an 852-amino-acid chain: MKPMLKDFSNLLLVVLCDYVLGEAEYLLLREPGHVALSNDTVYVDFQYFDGANGTLRNVSVLLLEANTNQTVTTKYLLTNQSQGTLKFECFYFKEAGDYWFTMTPEATDNSTPFPWWEKSAFLKVEWPVFHVDLNRSAKAAEGTFQVGLFTSQPLCPFPVDKPNIVVDVIFTNSLPEARRNSRQPLEIRTSKRTELAQGQWVEFGCAPLGPEAYVTVVLKLLGRDSVITSTGPIDLAQKFGYKLVMVPELTCESGVEVTVLPPPCTFVQGVVTVFKEAPRYPGKRTIHLAENSLPLGERRTIFNCTLFDMGKNKYCFDFGISSRSHFSAKEECMLIQRNTETWGLWQPWSQCSATCGDGVRERRRVCLTSFPSSPVCPGMSLEASLCSLEECAAFQPSSPSPLQPQGPVKSNNIVTVTGISLCLFIIIATVLITLWRRFGRPAKCSTPARHNSIHSPSFRKNSDEENICELSEQRGSFSDGGDGPTGSPGDTGIPLTYRRSGPVPPEDDASGSESFQSNAQKIIPPLFSYRLAQQQLKEMKKKGLTETTKVYHVSQSPLTDTAIDAAPSAPLDLESPEEAAANKFRIKSPFPEQPAVSAGERPPSRLDLNVTQASCAISPSQTLIRKSQARHVGSRGGPSERSHARNAHFRRTASFHEARQARPFRERSMSTLTPRQAPAYSSRTRTCEQAEDRFRPQSRGAHLFPEKLEHFQEASGTRGPLNPLPKSYTLGQPLRKPDLGDHQAGLVAGIERTEPHRARRGPSPSHKSVSRKQSSPISPKDNYQRVSSLSPSQCRKDKCQSFPTHPEFAFYDNTSFGLTEAEQRMLDLPGYFGSNEEDETTSTLSVEKLVI.

Positions 1 to 24 are cleaved as a signal peptide; the sequence is MKPMLKDFSNLLLVVLCDYVLGEA. Over 25–413 the chain is Extracellular; that stretch reads EYLLLREPGH…QPQGPVKSNN (389 aa). Residues Asn39, Asn53, Asn58, Asn69, Asn80, Asn135, and Asn304 are each glycosylated (N-linked (GlcNAc...) asparagine). Residues 340-393 enclose the TSP type-1 domain; it reads TETWGLWQPWSQCSATCGDGVRERRRVCLTSFPSSPVCPGMSLEASLCSLEECA. Disulfide bonds link Cys352–Cys387, Cys356–Cys392, and Cys367–Cys377. A helical membrane pass occupies residues 414–434; the sequence is IVTVTGISLCLFIIIATVLIT. Over 435–852 the chain is Cytoplasmic; that stretch reads LWRRFGRPAK…STLSVEKLVI (418 aa). Disordered stretches follow at residues 444–517 and 624–799; these read KCST…ESFQ and LIRK…RKDK. Residue Ser463 is modified to Phosphoserine. Over residues 645–654 the composition is skewed to basic residues; that stretch reads ARNAHFRRTA. Positions 655-669 are enriched in basic and acidic residues; that stretch reads SFHEARQARPFRERS. The segment covering 670-685 has biased composition (polar residues); the sequence is MSTLTPRQAPAYSSRT. Over residues 686 to 696 the composition is skewed to basic and acidic residues; it reads RTCEQAEDRFR. 2 stretches are compositionally biased toward polar residues: residues 766–778 and 785–794; these read SHKSVSRKQSSPI and QRVSSLSPSQ.

In terms of assembly, part of a complex composed of THSD1, PTK2/FAK1, TLN1 and VCL. Interacts with TLN1.

It is found in the endosome membrane. It localises to the cell junction. The protein localises to the focal adhesion. Its subcellular location is the membrane. The protein resides in the secreted. Its function is as follows. Is a positive regulator of nascent focal adhesion assembly, involved in the modulation of endothelial cell attachment to the extracellular matrix. This chain is Thrombospondin type-1 domain-containing protein 1 (THSD1), found in Homo sapiens (Human).